Here is a 275-residue protein sequence, read N- to C-terminus: Undecaprenyl-diphosphatase (275 aa).

8 helical membrane-spanning segments follow: residues 4–24, 54–74, 92–112, 123–143, 154–174, 194–214, 228–248, and 255–275; these read IYGLVVALILGIVEGLTEFLP, LGSILAVIIICKQRWFLLFGL, LHLYHIILGLIPSSILGLMFY, YVMYSLILGSLLLLISQLIHD, ISYLQAFLIGCFQCFALLPGF, AFEFSFLLAVPMIFGATILDL, MFIIGFITAFLVALITIKLFW, and SFIPFVLYRFLLVIVFYLILI.

Belongs to the UppP family.

The protein resides in the cell membrane. It catalyses the reaction di-trans,octa-cis-undecaprenyl diphosphate + H2O = di-trans,octa-cis-undecaprenyl phosphate + phosphate + H(+). Functionally, catalyzes the dephosphorylation of undecaprenyl diphosphate (UPP). Confers resistance to bacitracin. The protein is Undecaprenyl-diphosphatase of Baumannia cicadellinicola subsp. Homalodisca coagulata.